The following is a 135-amino-acid chain: Large ribosomal subunit protein uL16c (135 aa).

Belongs to the universal ribosomal protein uL16 family. In terms of assembly, part of the 50S ribosomal subunit.

It localises to the plastid. The chain is Large ribosomal subunit protein uL16c from Epifagus virginiana (Beechdrops).